The following is a 379-amino-acid chain: uncharacterized protein (379 aa).

This is an uncharacterized protein from Tortricidae (ClGV).